Consider the following 301-residue polypeptide: NAD kinase (301 aa).

Asp-73 (proton acceptor) is an active-site residue. Residues 73 to 74 (DG), 151 to 152 (ND), Arg-179, Asp-181, 192 to 197 (TAYALS), Ala-216, and Gln-250 contribute to the NAD(+) site.

Belongs to the NAD kinase family. A divalent metal cation is required as a cofactor.

It localises to the cytoplasm. It catalyses the reaction NAD(+) + ATP = ADP + NADP(+) + H(+). Functionally, involved in the regulation of the intracellular balance of NAD and NADP, and is a key enzyme in the biosynthesis of NADP. Catalyzes specifically the phosphorylation on 2'-hydroxyl of the adenosine moiety of NAD to yield NADP. This Methylibium petroleiphilum (strain ATCC BAA-1232 / LMG 22953 / PM1) protein is NAD kinase.